The following is a 208-amino-acid chain: 2-phospho-L-lactate guanylyltransferase (208 aa).

It belongs to the CofC family. Homodimer.

It carries out the reaction (2S)-2-phospholactate + GTP + H(+) = (2S)-lactyl-2-diphospho-5'-guanosine + diphosphate. It participates in cofactor biosynthesis; coenzyme F420 biosynthesis. Its function is as follows. Guanylyltransferase that catalyzes the activation of (2S)-2-phospholactate (2-PL) as (2S)-lactyl-2-diphospho-5'-guanosine, via the condensation of 2-PL with GTP. It is involved in the biosynthesis of coenzyme F420, a hydride carrier cofactor. The protein is 2-phospho-L-lactate guanylyltransferase of Methanosarcina barkeri (strain Fusaro / DSM 804).